Consider the following 321-residue polypeptide: Solute carrier family 25 member 33 (321 aa).

3 Solcar repeats span residues 9–118 (ENTL…AKEQ), 126–213 (NSNI…LKKY), and 231–315 (TNFF…IVYL). 6 helical membrane-spanning segments follow: residues 12-32 (LLHLFAGGCGGTVGAIFTCPL), 49-65 (VYYPQVHLGTISGAGVV), 121-141 (GVFVPNSNIVHVFSAGSAAFV), 190-210 (LTASYAGISETIICFAIYESL), 233-253 (FFGLMAAAALSKGCASCVAYP), and 298-318 (QIPNTAIVLSTYELIVYLLED).

This sequence belongs to the mitochondrial carrier (TC 2.A.29) family.

The protein resides in the mitochondrion inner membrane. The catalysed reaction is UTP(in) + UDP(out) = UTP(out) + UDP(in). The enzyme catalyses dUTP(out) + UTP(in) = dUTP(in) + UTP(out). It catalyses the reaction 5-methyl-UTP(out) + UTP(in) = 5-methyl-UTP(in) + UTP(out). It carries out the reaction 5-methyl-UDP(out) + UTP(in) = 5-methyl-UDP(in) + UTP(out). The catalysed reaction is UTP(in) + CTP(out) = UTP(out) + CTP(in). The enzyme catalyses CDP(out) + UTP(in) = CDP(in) + UTP(out). It catalyses the reaction dCTP(out) + UTP(in) = dCTP(in) + UTP(out). It carries out the reaction dCDP(out) + UTP(in) = dCDP(in) + UTP(out). The catalysed reaction is UTP(in) + GTP(out) = UTP(out) + GTP(in). The enzyme catalyses UTP(in) + GDP(out) = UTP(out) + GDP(in). It catalyses the reaction dGTP(out) + UTP(in) = dGTP(in) + UTP(out). It carries out the reaction dGDP(out) + UTP(in) = dGDP(in) + UTP(out). The catalysed reaction is ITP(out) + UTP(in) = ITP(in) + UTP(out). Its function is as follows. Mitochondrial transporter that imports/exports pyrimidine nucleotides into and from mitochondria. Selectively transports uridine, thymidine, guanosine, cytosine and inosine (deoxy)nucleoside di- and triphosphates by an antiport mechanism. May import (deoxy)nucleoside triphosphates in exchange for intramitochondrial (deoxy)nucleoside diphosphates, thus providing precursors necessary for de novo synthesis of mitochondrial DNA and RNA while exporting products of their catabolism. Participates in mitochondrial genome maintenance, regulation of mitochondrial membrane potential and mitochondrial respiration. Upon INS or IGF1 stimulation regulates cell growth and proliferation by controlling mitochondrial DNA replication and transcription, the ratio of mitochondria-to nuclear-encoded components of the electron transport chain resulting in control of mitochondrial ROS production. Participates in dendritic cell endocytosis and may associate with mitochondrial oxidative phosphorylation. In Bos taurus (Bovine), this protein is Solute carrier family 25 member 33 (SLC25A33).